The sequence spans 407 residues: BTB/POZ and MATH domain-containing protein 1 (407 aa).

In terms of domain architecture, MATH spans 33–167 (NGFHEFKICG…ENSLLVRCRV (135 aa)). Residues 203 to 270 (CDVVFQVDGE…IYWDELPDMQ (68 aa)) form the BTB domain.

This sequence belongs to the Tdpoz family. Homodimer or heterodimer with BPM3, BPM5 and BPM6. Interacts with CUL3A and CUL3B. Interacts with RAP2-4 and RAP2-13. Binds to MYB56 at the promoter of FLOWERING LOCUS T (FT). As to expression, ubiquitous.

It is found in the nucleus. Its pathway is protein modification; protein ubiquitination. Functionally, may act as a substrate-specific adapter of an E3 ubiquitin-protein ligase complex (CUL3-RBX1-BTB) which mediates the ubiquitination and subsequent proteasomal degradation of target proteins. The polypeptide is BTB/POZ and MATH domain-containing protein 1 (BPM1) (Arabidopsis thaliana (Mouse-ear cress)).